The sequence spans 256 residues: DNA repair protein RecO (256 aa).

Belongs to the RecO family.

Functionally, involved in DNA repair and RecF pathway recombination. The sequence is that of DNA repair protein RecO from Rhizobium etli (strain ATCC 51251 / DSM 11541 / JCM 21823 / NBRC 15573 / CFN 42).